Here is a 692-residue protein sequence, read N- to C-terminus: Chaperone protein dnaK1 (692 aa).

At Thr197 the chain carries Phosphothreonine; by autocatalysis.

Belongs to the heat shock protein 70 family.

Acts as a chaperone. This Synechocystis sp. (strain ATCC 27184 / PCC 6803 / Kazusa) protein is Chaperone protein dnaK1 (dnaK1).